The sequence spans 125 residues: Neuropeptide B (125 aa).

The first 24 residues, 1–24 (MARSATLAAAALALCLLLAPPGLA), serve as a signal peptide directing secretion. Positions 54 to 73 (RRSQPYRGAEPPGGAGASPE) are disordered. Positions 56–125 (SQPYRGAEPP…SLRAADCLAA (70 aa)) are excised as a propeptide.

The protein belongs to the neuropeptide B/W family. As to expression, widely expressed in the central nervous system. High levels are found in substantia nigra, hypothalamus, hippocampus, spinal cord, placenta and fetal brain; lower levels are found in testis, uterus and ovary. Also detected at high levels in colorectal adenocarcinoma.

The protein resides in the secreted. Its function is as follows. May be involved in the regulation of feeding, neuroendocrine system, memory, learning and in the afferent pain pathway. This chain is Neuropeptide B (NPB), found in Homo sapiens (Human).